The following is a 417-amino-acid chain: Actin-related protein 10 (417 aa).

The protein belongs to the actin family. Subunit of dynactin, a multiprotein complex part of a tripartite complex with dynein and a adapter, such as BICDL1, BICD2 or HOOK3. The dynactin complex is built around ACTR1A/ACTB filament and consists of an actin-related filament composed of a shoulder domain, a pointed end and a barbed end. Its length is defined by its flexible shoulder domain. The soulder is composed of 2 DCTN1 subunits, 4 DCTN2 and 2 DCTN3. The 4 DCNT2 (via N-terminus) bind the ACTR1A filament and act as molecular rulers to determine the length. The pointed end is important for binding dynein-dynactin cargo adapters. Consists of 4 subunits: ACTR10, DCNT4, DCTN5 and DCTN6. The barbed end is composed of a CAPZA1:CAPZB heterodimers, which binds ACTR1A/ACTB filament and dynactin and stabilizes dynactin.

The protein localises to the cytoplasm. The protein resides in the cytoskeleton. Its function is as follows. Part of the dynactin complex that activates the molecular motor dynein for ultra-processive transport along microtubules. The chain is Actin-related protein 10 (Actr10) from Mus musculus (Mouse).